Here is a 342-residue protein sequence, read N- to C-terminus: Elongation factor Ts (342 aa).

The tract at residues 79–82 is involved in Mg(2+) ion dislocation from EF-Tu; sequence TDFV.

This sequence belongs to the EF-Ts family.

Its subcellular location is the cytoplasm. Its function is as follows. Associates with the EF-Tu.GDP complex and induces the exchange of GDP to GTP. It remains bound to the aminoacyl-tRNA.EF-Tu.GTP complex up to the GTP hydrolysis stage on the ribosome. This Lactococcus lactis subsp. lactis (strain IL1403) (Streptococcus lactis) protein is Elongation factor Ts (tsf).